We begin with the raw amino-acid sequence, 147 residues long: Deoxyuridine 5'-triphosphate nucleotidohydrolase (147 aa).

Substrate contacts are provided by residues 67 to 69, asparagine 80, and 84 to 86; these read RSG and LID.

The protein belongs to the dUTPase family. The cofactor is Mg(2+).

The enzyme catalyses dUTP + H2O = dUMP + diphosphate + H(+). It participates in pyrimidine metabolism; dUMP biosynthesis; dUMP from dCTP (dUTP route): step 2/2. Its function is as follows. This enzyme is involved in nucleotide metabolism: it produces dUMP, the immediate precursor of thymidine nucleotides and it decreases the intracellular concentration of dUTP so that uracil cannot be incorporated into DNA. This Dictyoglomus turgidum (strain DSM 6724 / Z-1310) protein is Deoxyuridine 5'-triphosphate nucleotidohydrolase.